The sequence spans 288 residues: ATP synthase gamma chain (288 aa).

The protein belongs to the ATPase gamma chain family. In terms of assembly, F-type ATPases have 2 components, CF(1) - the catalytic core - and CF(0) - the membrane proton channel. CF(1) has five subunits: alpha(3), beta(3), gamma(1), delta(1), epsilon(1). CF(0) has three main subunits: a, b and c.

The protein localises to the cell membrane. Produces ATP from ADP in the presence of a proton gradient across the membrane. The gamma chain is believed to be important in regulating ATPase activity and the flow of protons through the CF(0) complex. The chain is ATP synthase gamma chain from Symbiobacterium thermophilum (strain DSM 24528 / JCM 14929 / IAM 14863 / T).